The sequence spans 66 residues: Large ribosomal subunit protein bL33c (66 aa).

Belongs to the bacterial ribosomal protein bL33 family.

The protein localises to the plastid. The protein resides in the chloroplast. The sequence is that of Large ribosomal subunit protein bL33c from Cycas taitungensis (Prince sago).